A 191-amino-acid chain; its full sequence is Peptidyl-tRNA hydrolase (191 aa).

A tRNA-binding site is contributed by Y14. Residue H19 is the Proton acceptor of the active site. The tRNA site is built by Y64, N66, and N112.

This sequence belongs to the PTH family. As to quaternary structure, monomer.

The protein resides in the cytoplasm. It catalyses the reaction an N-acyl-L-alpha-aminoacyl-tRNA + H2O = an N-acyl-L-amino acid + a tRNA + H(+). Functionally, hydrolyzes ribosome-free peptidyl-tRNAs (with 1 or more amino acids incorporated), which drop off the ribosome during protein synthesis, or as a result of ribosome stalling. Its function is as follows. Catalyzes the release of premature peptidyl moieties from peptidyl-tRNA molecules trapped in stalled 50S ribosomal subunits, and thus maintains levels of free tRNAs and 50S ribosomes. The sequence is that of Peptidyl-tRNA hydrolase from Clostridium beijerinckii (strain ATCC 51743 / NCIMB 8052) (Clostridium acetobutylicum).